We begin with the raw amino-acid sequence, 345 residues long: UDP-3-O-acylglucosamine N-acyltransferase (345 aa).

His253 functions as the Proton acceptor in the catalytic mechanism.

It belongs to the transferase hexapeptide repeat family. LpxD subfamily. Homotrimer.

The enzyme catalyses a UDP-3-O-[(3R)-3-hydroxyacyl]-alpha-D-glucosamine + a (3R)-hydroxyacyl-[ACP] = a UDP-2-N,3-O-bis[(3R)-3-hydroxyacyl]-alpha-D-glucosamine + holo-[ACP] + H(+). It functions in the pathway bacterial outer membrane biogenesis; LPS lipid A biosynthesis. Functionally, catalyzes the N-acylation of UDP-3-O-acylglucosamine using 3-hydroxyacyl-ACP as the acyl donor. Is involved in the biosynthesis of lipid A, a phosphorylated glycolipid that anchors the lipopolysaccharide to the outer membrane of the cell. This chain is UDP-3-O-acylglucosamine N-acyltransferase, found in Rickettsia massiliae (strain Mtu5).